Consider the following 294-residue polypeptide: 4-diphosphocytidyl-2-C-methyl-D-erythritol kinase (294 aa).

Lys-16 is a catalytic residue. Residue 99-109 participates in ATP binding; the sequence is PMGAGLGGGSS. Asp-141 is a catalytic residue.

Belongs to the GHMP kinase family. IspE subfamily.

The enzyme catalyses 4-CDP-2-C-methyl-D-erythritol + ATP = 4-CDP-2-C-methyl-D-erythritol 2-phosphate + ADP + H(+). It functions in the pathway isoprenoid biosynthesis; isopentenyl diphosphate biosynthesis via DXP pathway; isopentenyl diphosphate from 1-deoxy-D-xylulose 5-phosphate: step 3/6. Functionally, catalyzes the phosphorylation of the position 2 hydroxy group of 4-diphosphocytidyl-2C-methyl-D-erythritol. The sequence is that of 4-diphosphocytidyl-2-C-methyl-D-erythritol kinase from Polynucleobacter asymbioticus (strain DSM 18221 / CIP 109841 / QLW-P1DMWA-1) (Polynucleobacter necessarius subsp. asymbioticus).